Consider the following 341-residue polypeptide: Eukaryotic translation initiation factor 3 subunit I (341 aa).

WD repeat units lie at residues 8-49 (GHER…GTYR), 50-91 (GHQG…KTWD), 135-184 (QSDE…LLYN), 189-228 (ELNQ…VLKS), and 286-325 (GHFG…YDFL).

Belongs to the eIF-3 subunit I family. In terms of assembly, component of the eukaryotic translation initiation factor 3 (eIF-3) complex.

Its subcellular location is the cytoplasm. Functionally, component of the eukaryotic translation initiation factor 3 (eIF-3) complex, which is involved in protein synthesis of a specialized repertoire of mRNAs and, together with other initiation factors, stimulates binding of mRNA and methionyl-tRNAi to the 40S ribosome. The eIF-3 complex specifically targets and initiates translation of a subset of mRNAs involved in cell proliferation. The sequence is that of Eukaryotic translation initiation factor 3 subunit I from Chaetomium globosum (strain ATCC 6205 / CBS 148.51 / DSM 1962 / NBRC 6347 / NRRL 1970) (Soil fungus).